Here is a 453-residue protein sequence, read N- to C-terminus: Enolase (453 aa).

Gln-163 serves as a coordination point for (2R)-2-phosphoglycerate. Glu-205 serves as the catalytic Proton donor. Residues Asp-258, Glu-308, and Asp-335 each contribute to the Mg(2+) site. Positions 360, 389, 390, and 411 each coordinate (2R)-2-phosphoglycerate. The active-site Proton acceptor is Lys-360.

Belongs to the enolase family. Mg(2+) serves as cofactor.

It localises to the cytoplasm. Its subcellular location is the secreted. The protein resides in the cell surface. The enzyme catalyses (2R)-2-phosphoglycerate = phosphoenolpyruvate + H2O. The protein operates within carbohydrate degradation; glycolysis; pyruvate from D-glyceraldehyde 3-phosphate: step 4/5. In terms of biological role, catalyzes the reversible conversion of 2-phosphoglycerate (2-PG) into phosphoenolpyruvate (PEP). It is essential for the degradation of carbohydrates via glycolysis. In Mesoplasma florum (strain ATCC 33453 / NBRC 100688 / NCTC 11704 / L1) (Acholeplasma florum), this protein is Enolase.